A 91-amino-acid chain; its full sequence is Defensin-like protein 220 (91 aa).

The N-terminal stretch at M1 to S19 is a signal peptide. 3 disulfides stabilise this stretch: C61–C78, C64–C83, and C68–C85.

Belongs to the DEFL family.

It is found in the secreted. The sequence is that of Defensin-like protein 220 from Arabidopsis thaliana (Mouse-ear cress).